The sequence spans 404 residues: Glucose-1-phosphate adenylyltransferase (404 aa).

Alpha-D-glucose 1-phosphate is bound by residues tyrosine 99, glycine 164, glutamate 179–lysine 180, and serine 197.

Belongs to the bacterial/plant glucose-1-phosphate adenylyltransferase family.

It carries out the reaction alpha-D-glucose 1-phosphate + ATP + H(+) = ADP-alpha-D-glucose + diphosphate. It participates in capsule biogenesis; capsule polysaccharide biosynthesis. The protein operates within glycan biosynthesis; glycogen biosynthesis. In terms of biological role, involved in the biosynthesis of ADP-glucose, a building block, required in the biosynthesis of maltose-1-phosphate (M1P) and in the elongation reactions to produce linear alpha-1,4-glucans. Catalyzes the reaction between ATP and alpha-D-glucose 1-phosphate (G1P) to produce pyrophosphate and ADP-Glc. The chain is Glucose-1-phosphate adenylyltransferase from Mycobacterium leprae (strain Br4923).